Reading from the N-terminus, the 203-residue chain is Interferon type B (203 aa).

An N-terminal signal peptide occupies residues 1–27 (MTANHQSPGMHSILLLLLLPALTTTFS). Disulfide bonds link Cys-28–Cys-125 and Cys-57–Cys-164. N-linked (GlcNAc...) asparagine glycosylation is found at Asn-37 and Asn-160.

Belongs to the alpha/beta interferon family.

Its subcellular location is the secreted. Its function is as follows. Has antiviral activities. The chain is Interferon type B (IFNB) from Gallus gallus (Chicken).